Here is a 291-residue protein sequence, read N- to C-terminus: Nucleotide-binding protein jk1004 (291 aa).

Position 16–23 (Gly16–Arg23) interacts with ATP. Asp67–Ser70 contacts GTP.

It belongs to the RapZ-like family.

Displays ATPase and GTPase activities. This is Nucleotide-binding protein jk1004 from Corynebacterium jeikeium (strain K411).